The primary structure comprises 432 residues: Enolase (432 aa).

Gln167 lines the (2R)-2-phosphoglycerate pocket. Glu209 functions as the Proton donor in the catalytic mechanism. Asp246, Glu291, and Asp318 together coordinate Mg(2+). Positions 343, 372, 373, and 394 each coordinate (2R)-2-phosphoglycerate. Lys343 (proton acceptor) is an active-site residue.

This sequence belongs to the enolase family. In terms of assembly, component of the RNA degradosome, a multiprotein complex involved in RNA processing and mRNA degradation. Mg(2+) is required as a cofactor.

It is found in the cytoplasm. It localises to the secreted. The protein localises to the cell surface. It carries out the reaction (2R)-2-phosphoglycerate = phosphoenolpyruvate + H2O. It participates in carbohydrate degradation; glycolysis; pyruvate from D-glyceraldehyde 3-phosphate: step 4/5. Its function is as follows. Catalyzes the reversible conversion of 2-phosphoglycerate (2-PG) into phosphoenolpyruvate (PEP). It is essential for the degradation of carbohydrates via glycolysis. This chain is Enolase, found in Colwellia psychrerythraea (strain 34H / ATCC BAA-681) (Vibrio psychroerythus).